Reading from the N-terminus, the 230-residue chain is Acyl-protein thioesterase 1 (230 aa).

Catalysis depends on charge relay system residues S119, D174, and H208. K224 bears the N6-acetyllysine mark.

The protein belongs to the AB hydrolase superfamily. AB hydrolase 2 family. As to quaternary structure, homodimer.

It is found in the cytoplasm. It localises to the cell membrane. The protein localises to the nucleus membrane. The protein resides in the endoplasmic reticulum. It catalyses the reaction S-hexadecanoyl-L-cysteinyl-[protein] + H2O = L-cysteinyl-[protein] + hexadecanoate + H(+). It carries out the reaction 1-hexadecanoyl-sn-glycero-3-phosphocholine + H2O = sn-glycerol 3-phosphocholine + hexadecanoate + H(+). The enzyme catalyses a 1-(9Z-octadecenoyl)-2-acyl-sn-glycero-3-phosphocholine + H2O = a 2-acyl-sn-glycero-3-phosphocholine + (9Z)-octadecenoate + H(+). Its function is as follows. Acts as an acyl-protein thioesterase. Hydrolyzes fatty acids from S-acylated cysteine residues in proteins such as trimeric G alpha proteins or HRAS. Acts as a palmitoyl thioesterase that catalyzes depalmitoylation of proteins, such as ADRB2, KCNMA1 and SQSTM1. Acts as a negative regulator of autophagy by mediating palmitoylation of SQSTM1, decreasing affinity between SQSTM1 and ATG8 proteins and recruitment of ubiquitinated cargo proteins to autophagosomes. Acts as a lysophospholipase and hydrolyzes lysophosphatidylcholine (lyso-PC). Also hydrolyzes lysophosphatidylethanolamine (lyso-PE), lysophosphatidylinositol (lyso-PI) and lysophosphatidylserine (lyso-PS). Has much higher thioesterase activity than lysophospholipase activity. Contributes to the production of lysophosphatidic acid (LPA) during blood coagulation by recognizing and cleaving plasma phospholipids to generate lysophospholipids which in turn act as substrates for ENPP2 to produce LPA. The protein is Acyl-protein thioesterase 1 (LYPLA1) of Pongo abelii (Sumatran orangutan).